Here is a 723-residue protein sequence, read N- to C-terminus: Catalase-peroxidase (723 aa).

The segment at residues 89 to 212 is a cross-link (tryptophyl-tyrosyl-methioninium (Trp-Tyr) (with M-238)); it reads WHSAGTYRTG…LAAVQMGLIY (124 aa). Catalysis depends on His90, which acts as the Proton acceptor. A cross-link (tryptophyl-tyrosyl-methioninium (Tyr-Met) (with W-89)) is located at residues 212–238; that stretch reads YVNPEGPNGDPDPFAAAVDIRETFARM. His253 provides a ligand contact to heme b.

It belongs to the peroxidase family. Peroxidase/catalase subfamily. Homodimer or homotetramer. Heme b is required as a cofactor. Formation of the three residue Trp-Tyr-Met cross-link is important for the catalase, but not the peroxidase activity of the enzyme.

It carries out the reaction H2O2 + AH2 = A + 2 H2O. It catalyses the reaction 2 H2O2 = O2 + 2 H2O. In terms of biological role, bifunctional enzyme with both catalase and broad-spectrum peroxidase activity. This is Catalase-peroxidase from Shewanella baltica (strain OS185).